Reading from the N-terminus, the 346-residue chain is Senescence-specific cysteine protease SAG12 (346 aa).

Residues 1–25 (MALKHMQIFLFVAIFSSFCFSITLS) form the signal peptide. The N-linked (GlcNAc...) asparagine glycan is linked to Asn124. 3 disulfide bridges follow: Cys151-Cys192, Cys185-Cys225, and Cys283-Cys335. Cys154 is an active-site residue. His289 is an active-site residue. N-linked (GlcNAc...) asparagine glycosylation occurs at Asn301. Residue Asn310 is part of the active site.

The protein belongs to the peptidase C1 family. Found in senescent leaves, especially in senescence-associated vacuoles- (SAVs) containing cells (e.g. mesophyll and guard cells), and in senescencing ovules of unfertilised pistils.

The protein resides in the vacuole. In terms of biological role, cysteine protease that may have a developmental senescence specific cell death function during apoptosis, heavy metal detoxification, and hypersensitive response. This is Senescence-specific cysteine protease SAG12 from Arabidopsis thaliana (Mouse-ear cress).